The primary structure comprises 195 residues: ATP synthase subunit b (195 aa).

Residues 28-48 (IFPNVYVLIAHVISLIFLLLL) form a helical membrane-spanning segment.

This sequence belongs to the ATPase B chain family. In terms of assembly, F-type ATPases have 2 components, F(1) - the catalytic core - and F(0) - the membrane proton channel. F(1) has five subunits: alpha(3), beta(3), gamma(1), delta(1), epsilon(1). F(0) has three main subunits: a(1), b(2) and c(10-14). The alpha and beta chains form an alternating ring which encloses part of the gamma chain. F(1) is attached to F(0) by a central stalk formed by the gamma and epsilon chains, while a peripheral stalk is formed by the delta and b chains.

It localises to the cell membrane. In terms of biological role, f(1)F(0) ATP synthase produces ATP from ADP in the presence of a proton or sodium gradient. F-type ATPases consist of two structural domains, F(1) containing the extramembraneous catalytic core and F(0) containing the membrane proton channel, linked together by a central stalk and a peripheral stalk. During catalysis, ATP synthesis in the catalytic domain of F(1) is coupled via a rotary mechanism of the central stalk subunits to proton translocation. Its function is as follows. Component of the F(0) channel, it forms part of the peripheral stalk, linking F(1) to F(0). This Malacoplasma penetrans (strain HF-2) (Mycoplasma penetrans) protein is ATP synthase subunit b.